Here is a 538-residue protein sequence, read N- to C-terminus: Bifunctional purine biosynthesis protein PurH (538 aa).

In terms of domain architecture, MGS-like spans 6–158 (KHIPAPDLHR…KNHAYVATVV (153 aa)).

This sequence belongs to the PurH family.

It catalyses the reaction (6R)-10-formyltetrahydrofolate + 5-amino-1-(5-phospho-beta-D-ribosyl)imidazole-4-carboxamide = 5-formamido-1-(5-phospho-D-ribosyl)imidazole-4-carboxamide + (6S)-5,6,7,8-tetrahydrofolate. The enzyme catalyses IMP + H2O = 5-formamido-1-(5-phospho-D-ribosyl)imidazole-4-carboxamide. Its pathway is purine metabolism; IMP biosynthesis via de novo pathway; 5-formamido-1-(5-phospho-D-ribosyl)imidazole-4-carboxamide from 5-amino-1-(5-phospho-D-ribosyl)imidazole-4-carboxamide (10-formyl THF route): step 1/1. The protein operates within purine metabolism; IMP biosynthesis via de novo pathway; IMP from 5-formamido-1-(5-phospho-D-ribosyl)imidazole-4-carboxamide: step 1/1. This Brucella melitensis biotype 2 (strain ATCC 23457) protein is Bifunctional purine biosynthesis protein PurH.